The sequence spans 503 residues: Transmembrane protein 184C (503 aa).

7 helical membrane-spanning segments follow: residues 17-37 (LLIL…IWEF), 48-68 (VWFI…CGIL), 83-103 (IIRI…ALKY), 115-135 (ECYE…YLTI), 212-232 (YLVI…LLFY), 254-274 (VVFV…VGVI), and 287-307 (AVAT…AAIA). Disordered regions lie at residues 358–391 (PKKK…SPVG) and 479–503 (SPKP…STDS). Over residues 373–388 (SSLLSASSQDSSKPSS) the composition is skewed to low complexity. The segment covering 494 to 503 (PEGSDSSTDS) has biased composition (polar residues).

This sequence belongs to the TMEM184 family.

The protein localises to the membrane. Its function is as follows. Possible tumor suppressor which may play a role in cell growth. This Rattus norvegicus (Rat) protein is Transmembrane protein 184C (Tmem184c).